The sequence spans 588 residues: Ribonuclease Y (588 aa).

The helical transmembrane segment at 7 to 27 threads the bilayer; the sequence is VLLVAVLLLALIVLGAVLVGV. The tract at residues 130–162 is disordered; sequence ARRSGEREAAVLATTTREQAAEVERRAARMDDR. Basic and acidic residues predominate over residues 148-162; that stretch reads QAAEVERRAARMDDR. In terms of domain architecture, KH spans 278–359; the sequence is VVSVLHLPGD…HRIEEVHDLA (82 aa). Residues 404–497 enclose the HD domain; that stretch reads VLKHLVETAH…TQASDACSGG (94 aa).

Belongs to the RNase Y family.

The protein localises to the cell membrane. Endoribonuclease that initiates mRNA decay. The sequence is that of Ribonuclease Y from Salinispora arenicola (strain CNS-205).